A 234-amino-acid polypeptide reads, in one-letter code: Phosphoribosylaminoimidazole-succinocarboxamide synthase (234 aa).

The protein belongs to the SAICAR synthetase family.

The enzyme catalyses 5-amino-1-(5-phospho-D-ribosyl)imidazole-4-carboxylate + L-aspartate + ATP = (2S)-2-[5-amino-1-(5-phospho-beta-D-ribosyl)imidazole-4-carboxamido]succinate + ADP + phosphate + 2 H(+). The protein operates within purine metabolism; IMP biosynthesis via de novo pathway; 5-amino-1-(5-phospho-D-ribosyl)imidazole-4-carboxamide from 5-amino-1-(5-phospho-D-ribosyl)imidazole-4-carboxylate: step 1/2. This chain is Phosphoribosylaminoimidazole-succinocarboxamide synthase, found in Clostridium botulinum (strain Loch Maree / Type A3).